The following is a 1580-amino-acid chain: Ras GTPase-activating protein raskol (1580 aa).

At S164 the chain carries Phosphoserine. T167 bears the Phosphothreonine mark. Residues L197–E223 are disordered. S221 and S224 each carry phosphoserine. The PH domain maps to S233–A291. The C2 domain maps to W282 to Y400. Residues G490–I700 enclose the Ras-GAP domain. 7 disordered regions span residues G764–H819, L857–P892, A904–D1023, A1112–G1218, L1284–L1313, V1334–S1443, and Y1561–Q1580. Polar residues predominate over residues A776–E805. 3 stretches are compositionally biased toward low complexity: residues Q806–Q818, L857–Q885, and S926–G939. Positions H940–H954 are enriched in basic residues. Residues T987 to S1020 are compositionally biased toward low complexity. Positions S1140–Y1150 are enriched in polar residues. The segment covering Q1151–Q1169 has biased composition (low complexity). A phosphoserine mark is found at S1158 and S1164. Polar residues predominate over residues P1186–H1206. Low complexity-rich tracts occupy residues Q1207 to Q1216, S1285 to S1299, and H1351 to Q1362. The span at Q1363–Q1372 shows a compositional bias: basic and acidic residues. Residues A1374–A1388 show a composition bias toward low complexity. Polar residues predominate over residues S1396 to Q1415. Phosphoserine occurs at positions 1401 and 1403. Positions G1427–Q1438 are enriched in gly residues. Low complexity predominate over residues T1563–Q1580.

It localises to the cytoplasm. It is found in the cell membrane. The protein localises to the apical cell membrane. Its function is as follows. GTPase-activating protein, which acts as a negative regulator for some members of the Ras family. Probably decreases their signaling activity by stimulating their intrinsic GTPase activity, thereby lowering the levels of the GTP-bound active form. Functions with DE-cadherin (shg) to promote embryonic border cell (BC) migration and adhesion by regulating the distribution of actin protrusions in BCs. Promotes shg-mediated adhesion at the BC interfaces and likely maintains BC cluster adhesion during BC detachment from the follicular epithelium and subsequent BC migration. Also required for restricting the development of actin-rich protrusions to the front of migrating BC clusters thus ensuring unidirectional BC migration. Possibly functions by suppressing Rac1 signaling in non-leading BCs, thus limiting its activity to leading BCs where it initiates localized actin cytoskeleton remodeling to produce the polarized protrusions. This is Ras GTPase-activating protein raskol from Drosophila melanogaster (Fruit fly).